The sequence spans 491 residues: Glutamyl-tRNA(Gln) amidotransferase subunit A (491 aa).

The active-site Charge relay system is the serine 158. The active-site Acyl-ester intermediate is serine 182.

Belongs to the amidase family. GatA subfamily. As to quaternary structure, heterotrimer of A, B and C subunits.

The catalysed reaction is L-glutamyl-tRNA(Gln) + L-glutamine + ATP + H2O = L-glutaminyl-tRNA(Gln) + L-glutamate + ADP + phosphate + H(+). Its function is as follows. Allows the formation of correctly charged Gln-tRNA(Gln) through the transamidation of misacylated Glu-tRNA(Gln) in organisms which lack glutaminyl-tRNA synthetase. The reaction takes place in the presence of glutamine and ATP through an activated gamma-phospho-Glu-tRNA(Gln). In Bradyrhizobium diazoefficiens (strain JCM 10833 / BCRC 13528 / IAM 13628 / NBRC 14792 / USDA 110), this protein is Glutamyl-tRNA(Gln) amidotransferase subunit A.